A 779-amino-acid chain; its full sequence is MAATAELQGKYQKLAQEYSKLRAQNQVLKKGVVDEQANSASLKEQLKMKDQSLRKLQQEMDSLTFRNQQLAKRVELLQDELSLSETRGKKNKKSAESSSQLSQEQKSVFNEDLQKKIEENERLHILYFEADEQHKRLEAELRTKLEVLESDAAQHQAVVDSLTRKYTDTIEKLQNDKSKLEIKSQTLEREAKDCRLRTEECQQQLKNLQAALGSRLEESLCIINEKVPFNDTRSNRYNALNVPLHNRRYQLKLRDLAGQALSFVQEIVTALLNFHTYTEQKAQIFPIDSATDTISPLNQKFSQYLHENAFYVRPLEEGMLQLFESITEDTVTVLETAVKLKAFSEHLASYLCFLRKILPYQLKSLEEECESSLCTAALKARNMELHRDMKRLTAIFEKLHTYVSLLALPSTKPEGLLRTNYSLVFTNIAASLHGSHDILKDISKHYSQKATLEQDVPTATQKLVTTNDCILSSILSLTNGVGKIASFFSNNLDHFTSSLSYGPKGGTEFISPLSAECMLQYKKKAVAYMKSLKKPCADSVPYEEALANRRVLLSSTESREGLAQQVQQSLEKIAKLEQEKEHWMLEAQLAKIKLEKENQKLKNSLSGHLAETVQERSVLSNTAEQKEETTEKSQREPIKTTSLIGMLTITTDNEKVPDVESREDLIKKHYMARIAELTSHLQLADSKSVHFHAECRALAKRLSLAEKSKESLTEELKLASQSISRLQDELMTTKRSYEDQLSMMSDHLCSMNETLTKQREEIDTLKMTSKGNSKKNKTR.

Coiled coils occupy residues 2–212 and 556–614; these read AATA…QAAL and TESR…ETVQ. Disordered stretches follow at residues 85 to 105 and 612 to 637; these read ETRG…SQEQ and TVQE…QREP. Over residues 96–105 the composition is skewed to low complexity; it reads ESSSQLSQEQ. Residues 624-637 show a composition bias toward basic and acidic residues; that stretch reads EQKEETTEKSQREP. A coiled-coil region spans residues 693-739; the sequence is AECRALAKRLSLAEKSKESLTEELKLASQSISRLQDELMTTKRSYED. Residues 760 to 779 are disordered; sequence EEIDTLKMTSKGNSKKNKTR.

Component of the FERRY complex.

Its subcellular location is the early endosome. In terms of biological role, component of the FERRY complex (Five-subunit Endosomal Rab5 and RNA/ribosome intermediary). The FERRY complex directly interacts with mRNAs and RAB5A, and functions as a RAB5A effector involved in the localization and the distribution of specific mRNAs most likely by mediating their endosomal transport. The complex recruits mRNAs and ribosomes to early endosomes through direct mRNA-interaction. Putative regulator of protein phosphatase 1 (PP1) activity. May play a role in the endosomal sorting process or in endosome maturation pathway. In Gallus gallus (Chicken), this protein is Protein phosphatase 1 regulatory subunit 21 (PPP1R21).